Here is a 435-residue protein sequence, read N- to C-terminus: Putative acid phosphatase F26C11.1 (435 aa).

H38 (nucleophile) is an active-site residue. Residue D317 is the Proton donor of the active site. C382 and C388 are oxidised to a cystine.

Belongs to the histidine acid phosphatase family.

The catalysed reaction is a phosphate monoester + H2O = an alcohol + phosphate. This Caenorhabditis elegans protein is Putative acid phosphatase F26C11.1.